Reading from the N-terminus, the 305-residue chain is Acetaldehyde dehydrogenase (305 aa).

12-15 (SGNI) is a binding site for NAD(+). Catalysis depends on Cys-127, which acts as the Acyl-thioester intermediate. NAD(+) contacts are provided by residues 158-166 (SAGPGTRAN) and Asn-277.

Belongs to the acetaldehyde dehydrogenase family.

The catalysed reaction is acetaldehyde + NAD(+) + CoA = acetyl-CoA + NADH + H(+). The polypeptide is Acetaldehyde dehydrogenase (Mycolicibacterium paratuberculosis (strain ATCC BAA-968 / K-10) (Mycobacterium paratuberculosis)).